The chain runs to 205 residues: Suppressor of IKBKE 1 (205 aa).

Coiled coils occupy residues 4-32 (TIDK…LIDQ) and 154-192 (KAIQ…ESLR).

This sequence belongs to the SIKE family. As to quaternary structure, interacts with IKBKE and TBK1 via its coiled coil region. Interaction with TBK1 is disrupted upon viral infection or TLR3 stimulation. Interacts with CDC42BPB. Associates with the STRIPAK core complex composed of PP2A catalytic and scaffolding subunits, the striatins (PP2A regulatory subunits), the striatin-associated proteins MOB4, STRIP1 and STRIP2, PDCD10 and members of the STE20 kinases, such as STK24 and STK26.

The protein localises to the cytoplasm. In terms of biological role, suppressor of IKK-epsilon. Associates with the striatin-interacting phosphatase and kinase (STRIPAK) core complex, forming the extended (SIKE1:SLMAP)STRIPAK complex. The (SIKE1:SLMAP)STRIPAK complex dephosphorylates STK3 leading to the inhibition of Hippo signaling and the control of cell growth. This is Suppressor of IKBKE 1 (sike1) from Xenopus laevis (African clawed frog).